A 258-amino-acid polypeptide reads, in one-letter code: Indole-3-glycerol phosphate synthase (258 aa).

This sequence belongs to the TrpC family.

It carries out the reaction 1-(2-carboxyphenylamino)-1-deoxy-D-ribulose 5-phosphate + H(+) = (1S,2R)-1-C-(indol-3-yl)glycerol 3-phosphate + CO2 + H2O. The protein operates within amino-acid biosynthesis; L-tryptophan biosynthesis; L-tryptophan from chorismate: step 4/5. The chain is Indole-3-glycerol phosphate synthase from Endomicrobium trichonymphae.